Here is a 1057-residue protein sequence, read N- to C-terminus: MVKSGARASDSFIKQRSGSGSILRIKVENFMCHSNLQIEFGEWVNFITGQNGSGKSAILTALCVAFGCRARGTQRAATLKDFIKTGCSYAVVQVEMKNSGEDAFKPEIYGGVIIIERRITESATATVLKDYLGKKVSNKRDELRELVEHFNIDVENPCVVMSQDKSREFLHSGNDKDKFKFFFKATLLQQVNDLLQSIYEHLTKATAIVDELENTIKPIEKEISELRGKIKNMEQVEEIAQRLQQLKKKLAWSWVYDVDRQLQEQTEKIVKLKERIPTCQAKIDWELGKVESLRDTLTKKKAQVACLMDESTAMKREIESFHQSAKTAVREKIALQEEFNHKCNYVQKIKDRVRRLERQVGDINEQTMKNTQAEQSEIEEKLKYLEQEVEKVETLRSRLKEEENCFLEKAFEGRKKMEHIEDMIKNHQKRQRFITSNINDLKKHQTNKVTAFGGDRVINLLQAIERNHRRFRKPPIGPIGSHVTLVNGNKWASSVEQALGTLLNAFIVTDHKDSLTLRGCANEANYRNLKIIIYDFSRPRLNIPRHMVPQTEHPTIFSVIDSDNPTVLNVLVDQSGVERQVLAENYEEGKAVAFGKRLSNLKEVYTLDGYKMFFRGPVQTTLPPLSRRPSRLCASFDDQIKDLEIEASKEQNEINQCMRRKREAEENLEELELKVRQLKKHRSQAEKVLTTKELEMHDLKNTVAAEIEALPSSSVNELQREIMKDLEEIDEKEAFLEKLQNCLKEAELKANKLTALFENMRESAKGEIDAFEEAENELKKIEKDLQSAEAEKIHYENIMKNKVLPDIKNAEANYEELKNKRKESDQKASEICPESEIESLGPWDGSTPEQLSAQITRMNQRLHRENQQFSESIDDLRMMYESLERKIAKKRKSYQDHREKLMACKNALDSRWAKFQRNASLLRRQLTWQFNAHLGKKGISGHIKVSYENKTLSIEVKMPQDATSNVVRDTKGLSGGERSFSTLCFALALHEMTEAPFRAMDEFDVFMDAVSRKISLDALVDFAIGEGSQWMFITPHDISMVKSHERIKKQQMAAPRS.

Residues 22-1047 (ILRIKVENFM…ISMVKSHERI (1026 aa)) enclose the Zinc-hook domain. Residue 49–56 (GQNGSGKS) participates in ATP binding. The stretch at 135–448 (KVSNKRDELR…NDLKKHQTNK (314 aa)) forms a coiled coil. The flexible hinge stretch occupies residues 449 to 632 (VTAFGGDRVI…PPLSRRPSRL (184 aa)). The stretch at 633–904 (CASFDDQIKD…QDHREKLMAC (272 aa)) forms a coiled coil. The span at 818–828 (KNKRKESDQKA) shows a compositional bias: basic and acidic residues. The interval 818 to 845 (KNKRKESDQKASEICPESEIESLGPWDG) is disordered.

Belongs to the SMC family. SMC6 subfamily. As to quaternary structure, forms a heterodimer with SMC5. The SMC5-SMC6 complex is composed of the SMC5 and SMC6 heterodimer attached via their hinge domain and from the non-SMC subunit NSE4A or NSE4B. As to expression, expressed in seedlings, rosette leaves and floral buds.

Its subcellular location is the nucleus. It is found in the chromosome. Core component of the SMC5-SMC6 complex that promotes sister chromatid alignment after DNA damage and facilitates double-stranded DNA breaks (DSBs) repair via homologous recombination between sister chromatids. The sequence is that of Structural maintenance of chromosomes protein 6B (SMC6B) from Arabidopsis thaliana (Mouse-ear cress).